Here is a 322-residue protein sequence, read N- to C-terminus: MARDKIALIGSGQIGGTLAHLIGLKELGDVVMFDIAEGVPQGKALDIAQSSPVDGFDAHYSGANSYEALDNAKVCIVTAGVPRKPGMSRDDLLSINLKVMEQVGAGIKKYAPDAFVICITNPLDAMVWALQKASGLPAKKVVGMAGVLDSARFRYFLADEFNVSVEDVTAFVLGGHGDTMVPLTKYSTVAGIPLPDLVKMGWTSQARIDEIVDRTRNGGAEIVNLLKTGSAYYAPAASAIAMAESYLRDKKRVLPCAAHLNGEFGVKDMYVGVPVVIGSKGVERIVEIELAGKDREAFDKSVAAVQGLVDACKKIAPDLLGR.

NAD(+) contacts are provided by residues 10–15 (GSGQIG) and Asp34. The substrate site is built by Arg83 and Arg89. NAD(+)-binding positions include Asn96 and 119–121 (ITN). Substrate-binding residues include Asn121 and Arg152. His176 (proton acceptor) is an active-site residue.

Belongs to the LDH/MDH superfamily. MDH type 3 family.

It catalyses the reaction (S)-malate + NAD(+) = oxaloacetate + NADH + H(+). In terms of biological role, catalyzes the reversible oxidation of malate to oxaloacetate. This is Malate dehydrogenase from Bradyrhizobium sp. (strain BTAi1 / ATCC BAA-1182).